A 481-amino-acid polypeptide reads, in one-letter code: Alpha-L-arabinofuranosidase 43 (481 aa).

The first 19 residues, 1–19 (MRFSVFTAAIAAAFSACCA), serve as a signal peptide directing secretion. N-linked (GlcNAc...) asparagine glycans are attached at residues Asn158, Asn176, and Asn365.

Belongs to the glycosyl hydrolase 43 family.

Its subcellular location is the secreted. The catalysed reaction is Hydrolysis of terminal non-reducing alpha-L-arabinofuranoside residues in alpha-L-arabinosides.. With respect to regulation, activity is significantly inhibited by SDS and partially inhibited by Ag(+), Fe(3+) and beta-mercaptoethanol. Its function is as follows. Alpha-L-arabinofuranosidase specific for the cleavage of alpha-1,3-linkage. Shows high activity against 4-nitrophenyl alpha-L-arabinofuranoside, debranched arabinan, and sugar beet arabinan. The chain is Alpha-L-arabinofuranosidase 43 from Humicola insolens (Soft-rot fungus).